The following is a 241-amino-acid chain: Spheroidene monooxygenase (241 aa).

The protein belongs to the CrtA family. It depends on heme as a cofactor.

The catalysed reaction is spheroidene + 4 reduced [2Fe-2S]-[ferredoxin] + 2 O2 + 4 H(+) = spheroiden-2-one + 4 oxidized [2Fe-2S]-[ferredoxin] + 3 H2O. It carries out the reaction spirilloxanthin + 4 reduced [2Fe-2S]-[ferredoxin] + 2 O2 + 4 H(+) = 2-oxospirilloxanthin + 4 oxidized [2Fe-2S]-[ferredoxin] + 3 H2O. It catalyses the reaction 2-oxospirilloxanthin + 4 reduced [2Fe-2S]-[ferredoxin] + 2 O2 + 4 H(+) = 2,2'-dioxospirilloxanthin + 4 oxidized [2Fe-2S]-[ferredoxin] + 3 H2O. The enzyme catalyses spheroidene + 2 reduced [2Fe-2S]-[ferredoxin] + O2 + 2 H(+) = 2-hydroxyspheroidene + 2 oxidized [2Fe-2S]-[ferredoxin] + H2O. The catalysed reaction is 2-hydroxyspheroidene + 2 reduced [2Fe-2S]-[ferredoxin] + O2 + 2 H(+) = 2,2-dihydroxyspheroidene + 2 oxidized [2Fe-2S]-[ferredoxin] + H2O. It carries out the reaction 2,2-dihydroxyspheroidene = spheroiden-2-one + H2O. It catalyses the reaction spirilloxanthin + 2 reduced [2Fe-2S]-[ferredoxin] + O2 + 2 H(+) = 2-hydroxyspirilloxanthin + 2 oxidized [2Fe-2S]-[ferredoxin] + H2O. The enzyme catalyses 2-hydroxyspirilloxanthin + 2 reduced [2Fe-2S]-[ferredoxin] + O2 + 2 H(+) = 2,2-dihydroxyspirilloxanthin + 2 oxidized [2Fe-2S]-[ferredoxin] + H2O. The catalysed reaction is 2,2-dihydroxyspirilloxanthin = 2-oxospirilloxanthin + H2O. It carries out the reaction 2-oxospirilloxanthin + 2 reduced [2Fe-2S]-[ferredoxin] + O2 + 2 H(+) = 2'-hydroxy-2-oxospirilloxanthin + 2 oxidized [2Fe-2S]-[ferredoxin] + H2O. It catalyses the reaction 2'-hydroxy-2-oxospirilloxanthin + 2 reduced [2Fe-2S]-[ferredoxin] + O2 + 2 H(+) = 2',2'-dihydroxy-2-oxospirilloxanthin + 2 oxidized [2Fe-2S]-[ferredoxin] + H2O. The enzyme catalyses 2',2'-dihydroxy-2-oxospirilloxanthin = 2,2'-dioxospirilloxanthin + H2O. Its pathway is carotenoid biosynthesis; spheroidene biosynthesis. Functionally, involved in the biosynthesis of the carotenoid spheroidene. Catalyzes the introduction of one keto group at the C-2 position of spheroidene. In vitro, can also catalyze the introduction of two keto groups at the C-2 and C-2' positions of spirilloxanthin, but spirilloxanthin biosynthesis pathway is not present in R.capsulatus. This Rhodobacter capsulatus (strain ATCC BAA-309 / NBRC 16581 / SB1003) protein is Spheroidene monooxygenase.